A 279-amino-acid polypeptide reads, in one-letter code: Shikimate dehydrogenase (NADP(+)) (279 aa).

Shikimate-binding positions include 20-22 and Thr67; that span reads SRS. The Proton acceptor role is filled by Lys71. Asp83 is a binding site for NADP(+). Positions 92 and 108 each coordinate shikimate. Residues 134–138 and Leu223 contribute to the NADP(+) site; that span reads GAGGA. Residue Tyr225 coordinates shikimate. Gly246 serves as a coordination point for NADP(+).

Belongs to the shikimate dehydrogenase family. As to quaternary structure, homodimer.

The enzyme catalyses shikimate + NADP(+) = 3-dehydroshikimate + NADPH + H(+). It participates in metabolic intermediate biosynthesis; chorismate biosynthesis; chorismate from D-erythrose 4-phosphate and phosphoenolpyruvate: step 4/7. In terms of biological role, involved in the biosynthesis of the chorismate, which leads to the biosynthesis of aromatic amino acids. Catalyzes the reversible NADPH linked reduction of 3-dehydroshikimate (DHSA) to yield shikimate (SA). The chain is Shikimate dehydrogenase (NADP(+)) from Cereibacter sphaeroides (strain ATCC 17025 / ATH 2.4.3) (Rhodobacter sphaeroides).